We begin with the raw amino-acid sequence, 444 residues long: Ribulose bisphosphate carboxylase large chain (444 aa).

The residue at position 7 (lysine 7) is an N6,N6,N6-trimethyllysine. Residues asparagine 116 and threonine 166 each coordinate substrate. Lysine 168 (proton acceptor) is an active-site residue. Residue lysine 170 participates in substrate binding. 3 residues coordinate Mg(2+): lysine 194, aspartate 196, and glutamate 197. An N6-carboxylysine modification is found at lysine 194. Histidine 287 serves as the catalytic Proton acceptor. Residues arginine 288, histidine 320, and serine 372 each coordinate substrate.

Belongs to the RuBisCO large chain family. Type I subfamily. In terms of assembly, heterohexadecamer of 8 large chains and 8 small chains; disulfide-linked. The disulfide link is formed within the large subunit homodimers. Mg(2+) is required as a cofactor. The disulfide bond which can form in the large chain dimeric partners within the hexadecamer appears to be associated with oxidative stress and protein turnover.

The protein localises to the plastid. The protein resides in the chloroplast. The enzyme catalyses 2 (2R)-3-phosphoglycerate + 2 H(+) = D-ribulose 1,5-bisphosphate + CO2 + H2O. The catalysed reaction is D-ribulose 1,5-bisphosphate + O2 = 2-phosphoglycolate + (2R)-3-phosphoglycerate + 2 H(+). Functionally, ruBisCO catalyzes two reactions: the carboxylation of D-ribulose 1,5-bisphosphate, the primary event in carbon dioxide fixation, as well as the oxidative fragmentation of the pentose substrate in the photorespiration process. Both reactions occur simultaneously and in competition at the same active site. This Watsonia angusta protein is Ribulose bisphosphate carboxylase large chain.